We begin with the raw amino-acid sequence, 173 residues long: RNA 2',3'-cyclic phosphodiesterase (173 aa).

His-38 acts as the Proton donor in catalysis. 2 consecutive short sequence motifs (HXTX) follow at residues 38 to 41 (HITV) and 118 to 121 (HLTI). The active-site Proton acceptor is the His-118.

Belongs to the 2H phosphoesterase superfamily. ThpR family.

It carries out the reaction a 3'-end 2',3'-cyclophospho-ribonucleotide-RNA + H2O = a 3'-end 2'-phospho-ribonucleotide-RNA + H(+). Its function is as follows. Hydrolyzes RNA 2',3'-cyclic phosphodiester to an RNA 2'-phosphomonoester. This chain is RNA 2',3'-cyclic phosphodiesterase, found in Methanocaldococcus jannaschii (strain ATCC 43067 / DSM 2661 / JAL-1 / JCM 10045 / NBRC 100440) (Methanococcus jannaschii).